A 161-amino-acid chain; its full sequence is Small ribosomal subunit protein uS9 (161 aa).

This sequence belongs to the universal ribosomal protein uS9 family.

This chain is Small ribosomal subunit protein uS9, found in Rickettsia canadensis (strain McKiel).